A 56-amino-acid polypeptide reads, in one-letter code: LAAVSVDCSEYPKPACTLEYRPLCGSDNKTYGNKCNFCNAVVESNGTLTLSHFGKC.

Residues 6-56 (VDCSEYPKPACTLEYRPLCGSDNKTYGNKCNFCNAVVESNGTLTLSHFGKC) form the Kazal-like domain. Cystine bridges form between cysteine 8–cysteine 38, cysteine 16–cysteine 35, and cysteine 24–cysteine 56. N-linked (GlcNAc...) asparagine glycosylation occurs at asparagine 45.

The protein resides in the secreted. This is Ovomucoid from Meleagris ocellata (Ocellated turkey).